The following is a 227-amino-acid chain: Translation initiation factor 6 (227 aa).

The protein belongs to the eIF-6 family.

In terms of biological role, binds to the 50S ribosomal subunit and prevents its association with the 30S ribosomal subunit to form the 70S initiation complex. The chain is Translation initiation factor 6 from Methanococcus maripaludis (strain C5 / ATCC BAA-1333).